The primary structure comprises 421 residues: Lipid II:glycine glycyltransferase (421 aa).

The protein belongs to the FemABX family. In terms of assembly, monomer.

Its subcellular location is the cytoplasm. It catalyses the reaction beta-D-GlcNAc-(1-&gt;4)-Mur2Ac(oyl-L-Ala-D-isoglutaminyl-L-Lys-D-Ala-D-Ala)-di-trans,octa-cis-undecaprenyl diphosphate + glycyl-tRNA(Gly) = beta-D-GlcNAc-(1-&gt;4)-Mur2Ac(oyl-L-Ala-D-isoglutaminyl-L-Lys-(N(6)-Gly)-D-Ala-D-Ala)-di-trans,octa-cis-undecaprenyl diphosphate + tRNA(Gly) + H(+). Functionally, catalyzes the incorporation of the first glycine of the pentaglycine interpeptide bridge, which is characteristic of the S.aureus peptidoglycan. This glycine is added to the epsilon-amino group of the L-lysine of the membrane-bound lipid II intermediate (GlcNAc-(beta-1,4)-N-acetylmuramic acid(-L-Ala-D-iGln-L-Lys-D-Ala-D-Ala)-pyrophosphoryl-undecaprenol), using glycyl-tRNA(Gly) as donor, in a ribosome-independent mechanism. Involved in methicillin resistance. The polypeptide is Lipid II:glycine glycyltransferase (femX) (Staphylococcus aureus (strain MRSA252)).